A 165-amino-acid polypeptide reads, in one-letter code: 3-isopropylmalate dehydratase small subunit (165 aa).

It belongs to the LeuD family. LeuD type 2 subfamily. In terms of assembly, heterodimer of LeuC and LeuD.

The catalysed reaction is (2R,3S)-3-isopropylmalate = (2S)-2-isopropylmalate. The protein operates within amino-acid biosynthesis; L-leucine biosynthesis; L-leucine from 3-methyl-2-oxobutanoate: step 2/4. In terms of biological role, catalyzes the isomerization between 2-isopropylmalate and 3-isopropylmalate, via the formation of 2-isopropylmaleate. The polypeptide is 3-isopropylmalate dehydratase small subunit (Saccharolobus islandicus (strain M.16.27) (Sulfolobus islandicus)).